We begin with the raw amino-acid sequence, 213 residues long: Transcription antitermination protein NusB (213 aa).

Belongs to the NusB family.

In terms of biological role, involved in transcription antitermination. Required for transcription of ribosomal RNA (rRNA) genes. Binds specifically to the boxA antiterminator sequence of the ribosomal RNA (rrn) operons. This chain is Transcription antitermination protein NusB, found in Synechococcus elongatus (strain ATCC 33912 / PCC 7942 / FACHB-805) (Anacystis nidulans R2).